The primary structure comprises 176 residues: Bifunctional protein PyrR (176 aa).

The PRPP-binding signature appears at 93–105 (VILVDDVLYTGRT).

It belongs to the purine/pyrimidine phosphoribosyltransferase family. PyrR subfamily. Homodimer and homohexamer; in equilibrium.

It catalyses the reaction UMP + diphosphate = 5-phospho-alpha-D-ribose 1-diphosphate + uracil. In terms of biological role, regulates transcriptional attenuation of the pyrimidine nucleotide (pyr) operon by binding in a uridine-dependent manner to specific sites on pyr mRNA. This disrupts an antiterminator hairpin in the RNA and favors formation of a downstream transcription terminator, leading to a reduced expression of downstream genes. Also displays a weak uracil phosphoribosyltransferase activity which is not physiologically significant. In Streptococcus mutans serotype c (strain ATCC 700610 / UA159), this protein is Bifunctional protein PyrR.